A 434-amino-acid polypeptide reads, in one-letter code: Enolase (434 aa).

Q163 contributes to the (2R)-2-phosphoglycerate binding site. E205 serves as the catalytic Proton donor. 3 residues coordinate Mg(2+): D243, E291, and D318. (2R)-2-phosphoglycerate contacts are provided by K343, R372, S373, and K394. The active-site Proton acceptor is the K343.

Belongs to the enolase family. Requires Mg(2+) as cofactor.

It is found in the cytoplasm. The protein localises to the secreted. Its subcellular location is the cell surface. It catalyses the reaction (2R)-2-phosphoglycerate = phosphoenolpyruvate + H2O. It functions in the pathway carbohydrate degradation; glycolysis; pyruvate from D-glyceraldehyde 3-phosphate: step 4/5. Functionally, catalyzes the reversible conversion of 2-phosphoglycerate (2-PG) into phosphoenolpyruvate (PEP). It is essential for the degradation of carbohydrates via glycolysis. This is Enolase from Fusobacterium nucleatum subsp. nucleatum (strain ATCC 25586 / DSM 15643 / BCRC 10681 / CIP 101130 / JCM 8532 / KCTC 2640 / LMG 13131 / VPI 4355).